A 409-amino-acid polypeptide reads, in one-letter code: Pentatricopeptide repeat-containing protein At1g01970 (409 aa).

PPR repeat units lie at residues 164–198 (NARD…GFLI), 199–233 (DQVT…GEPL), 234–268 (DYRS…EICA), 269–303 (GREV…GITP), 304–338 (DVKL…GIKA), and 339–373 (TDKC…SIML).

Belongs to the PPR family. P subfamily.

This chain is Pentatricopeptide repeat-containing protein At1g01970, found in Arabidopsis thaliana (Mouse-ear cress).